The sequence spans 205 residues: Probable thymidylate kinase (205 aa).

10-17 contacts ATP; that stretch reads GIDGSGKT.

Belongs to the thymidylate kinase family.

The enzyme catalyses dTMP + ATP = dTDP + ADP. The sequence is that of Probable thymidylate kinase (tmk) from Pyrococcus abyssi (strain GE5 / Orsay).